The sequence spans 290 residues: Ribosomal RNA small subunit methyltransferase A (290 aa).

S-adenosyl-L-methionine-binding residues include N27, L29, G54, E75, D100, and N125.

This sequence belongs to the class I-like SAM-binding methyltransferase superfamily. rRNA adenine N(6)-methyltransferase family. RsmA subfamily.

It is found in the cytoplasm. It catalyses the reaction adenosine(1518)/adenosine(1519) in 16S rRNA + 4 S-adenosyl-L-methionine = N(6)-dimethyladenosine(1518)/N(6)-dimethyladenosine(1519) in 16S rRNA + 4 S-adenosyl-L-homocysteine + 4 H(+). Specifically dimethylates two adjacent adenosines (A1518 and A1519) in the loop of a conserved hairpin near the 3'-end of 16S rRNA in the 30S particle. May play a critical role in biogenesis of 30S subunits. This is Ribosomal RNA small subunit methyltransferase A from Streptococcus pneumoniae (strain CGSP14).